The primary structure comprises 114 residues: Probable acid stress chaperone HdeA (114 aa).

The N-terminal stretch at 1 to 26 (MIKALFNKNTALAAVTILALSGGAMA) is a signal peptide. Residues Cys-46 and Cys-94 are joined by a disulfide bond.

Belongs to the HdeA family.

It localises to the periplasm. Its function is as follows. Required for optimal acid stress protection. Exhibits a chaperone-like activity only at low pH by suppressing non-specifically the aggregation of denaturated periplasmic proteins. The sequence is that of Probable acid stress chaperone HdeA from Brucella suis biovar 1 (strain 1330).